The primary structure comprises 388 residues: S-adenosylmethionine synthase (388 aa).

Histidine 16 contacts ATP. Aspartate 18 contributes to the Mg(2+) binding site. Glutamate 44 is a binding site for K(+). The L-methionine site is built by glutamate 57 and glutamine 100. Residues 100–110 (QSPDIAQGVNE) are flexible loop. ATP-binding positions include 167-169 (DGK), 233-234 (RF), aspartate 242, 248-249 (RK), and lysine 269. L-methionine is bound at residue aspartate 242. Lysine 273 is a binding site for L-methionine.

The protein belongs to the AdoMet synthase family. Homotetramer; dimer of dimers. The cofactor is Mg(2+). It depends on K(+) as a cofactor.

It is found in the cytoplasm. It carries out the reaction L-methionine + ATP + H2O = S-adenosyl-L-methionine + phosphate + diphosphate. Its pathway is amino-acid biosynthesis; S-adenosyl-L-methionine biosynthesis; S-adenosyl-L-methionine from L-methionine: step 1/1. Functionally, catalyzes the formation of S-adenosylmethionine (AdoMet) from methionine and ATP. The overall synthetic reaction is composed of two sequential steps, AdoMet formation and the subsequent tripolyphosphate hydrolysis which occurs prior to release of AdoMet from the enzyme. In Desulfosudis oleivorans (strain DSM 6200 / JCM 39069 / Hxd3) (Desulfococcus oleovorans), this protein is S-adenosylmethionine synthase.